Reading from the N-terminus, the 721-residue chain is BBSome complex member bbs-7 (721 aa).

As to quaternary structure, part of BBSome complex, that contains at least bbs-1, bbs-2, bbs-4, bbs-5, osm-12, bbs-8/ttc-8 and bbs-9. Interacts with bbs-1. As to expression, expressed in ciliated cells including amphid and both inner and outer labial neurons of the head and in both phasmid neurons PHA and PHB in the tail at larval stages L1 and L2.

It localises to the cell projection. The protein localises to the cilium. The protein resides in the cytoplasm. Its subcellular location is the cytoskeleton. It is found in the cilium basal body. It localises to the cilium axoneme. In terms of biological role, component of the BBSome complex. The BBSome complex is thought to function as a coat complex required for sorting of specific membrane proteins to the primary cilia. The BBSome complex is required for ciliogenesis but is dispensable for centriolar satellite function. Required for proper BBSome complex assembly and its ciliary localization. Required for cilia biogenesis and both the assembly and movement of intraflagellar transport proteins along the ciliary axoneme. Plays a role in the removal of degraded mechanosensory receptors within the cilia. Plays a role in guanylyl cyclase localization in the ring-like structures at the base of the finger compartment in AFD sensory neurons. In ciliated sensory neurons, required for the sensation of nitric oxide and avoidance of NO-producing organisms like P.aeruginosa. This is BBSome complex member bbs-7 from Caenorhabditis elegans.